The primary structure comprises 142 residues: MAIYGIGTDIAQVSRIAAVLERTGGRFAEKVLGPDELRVFHARRARSEARGIAFLATRFSAKEAFSKAIGLGMHWPMTWRALQTLNHPSGEPYVVASGELADWLAARGITARVTVSDERDYAVSFVVAETDAAPAPVSRTSS.

2 residues coordinate Mg(2+): Asp-9 and Glu-63.

The protein belongs to the P-Pant transferase superfamily. AcpS family. Mg(2+) is required as a cofactor.

Its subcellular location is the cytoplasm. The catalysed reaction is apo-[ACP] + CoA = holo-[ACP] + adenosine 3',5'-bisphosphate + H(+). In terms of biological role, transfers the 4'-phosphopantetheine moiety from coenzyme A to a Ser of acyl-carrier-protein. The protein is Holo-[acyl-carrier-protein] synthase of Burkholderia lata (strain ATCC 17760 / DSM 23089 / LMG 22485 / NCIMB 9086 / R18194 / 383).